Reading from the N-terminus, the 396-residue chain is L-lactate dehydrogenase (396 aa).

Residues 1-380 (MIISAASDYR…TQDSLVQGLG (380 aa)) enclose the FMN hydroxy acid dehydrogenase domain. Residue Y24 coordinates substrate. 2 residues coordinate FMN: S106 and Q127. A substrate-binding site is contributed by Y129. T155 serves as a coordination point for FMN. R164 serves as a coordination point for substrate. K251 contributes to the FMN binding site. Residue H275 is the Proton acceptor of the active site. Substrate is bound at residue R278. FMN is bound at residue 306-330 (DSGIRNGLDVVRMIALGADTVLLGR).

The protein belongs to the FMN-dependent alpha-hydroxy acid dehydrogenase family. The cofactor is FMN.

The protein resides in the cell inner membrane. The enzyme catalyses (S)-lactate + A = pyruvate + AH2. Functionally, catalyzes the conversion of L-lactate to pyruvate. Is coupled to the respiratory chain. In Escherichia coli O127:H6 (strain E2348/69 / EPEC), this protein is L-lactate dehydrogenase.